The sequence spans 270 residues: Chymotrypsin-like elastase family member 3A (270 aa).

Positions 1-15 (MMLRLLSSLLLVAVA) form a signal peptide, or 16. A propeptide spans 16-28 (SGYGPPSSHSSSR) (activation peptide). In terms of domain architecture, Peptidase S1 spans 29–268 (VVHGEDAVPY…FIDWIEETIA (240 aa)). A disulfide bond links Cys-58 and Cys-74. Residue His-73 is the Charge relay system of the active site. The N-linked (GlcNAc...) asparagine glycan is linked to Asn-114. Residues Cys-117 and Cys-120 are joined by a disulfide bond. Residue Asp-123 is the Charge relay system of the active site. Intrachain disulfides connect Cys-157/Cys-223, Cys-188/Cys-204, and Cys-213/Cys-244. Ser-217 functions as the Charge relay system in the catalytic mechanism.

It belongs to the peptidase S1 family. Elastase subfamily.

The catalysed reaction is Preferential cleavage: Ala-|-Xaa. Does not hydrolyze elastin.. Efficient protease with alanine specificity but only little elastolytic activity. The sequence is that of Chymotrypsin-like elastase family member 3A (CELA3A) from Homo sapiens (Human).